Consider the following 364-residue polypeptide: Succinate--CoA ligase [ADP-forming] subunit beta (364 aa).

An ATP-grasp domain is found at Lys-9–Lys-229. ATP contacts are provided by residues Lys-43, Gly-50–Gly-52, Glu-89, Leu-92, and Glu-97. Positions 189 and 203 each coordinate Mg(2+). Residues Asn-246 and Gly-303–Thr-305 contribute to the substrate site.

It belongs to the succinate/malate CoA ligase beta subunit family. In terms of assembly, heterotetramer of two alpha and two beta subunits. The cofactor is Mg(2+).

The catalysed reaction is succinate + ATP + CoA = succinyl-CoA + ADP + phosphate. It catalyses the reaction GTP + succinate + CoA = succinyl-CoA + GDP + phosphate. It functions in the pathway carbohydrate metabolism; tricarboxylic acid cycle; succinate from succinyl-CoA (ligase route): step 1/1. In terms of biological role, succinyl-CoA synthetase functions in the citric acid cycle (TCA), coupling the hydrolysis of succinyl-CoA to the synthesis of either ATP or GTP and thus represents the only step of substrate-level phosphorylation in the TCA. The beta subunit provides nucleotide specificity of the enzyme and binds the substrate succinate, while the binding sites for coenzyme A and phosphate are found in the alpha subunit. This chain is Succinate--CoA ligase [ADP-forming] subunit beta, found in Methanocaldococcus jannaschii (strain ATCC 43067 / DSM 2661 / JAL-1 / JCM 10045 / NBRC 100440) (Methanococcus jannaschii).